The following is a 157-amino-acid chain: Class I hydrophobin rodA (157 aa).

Positions 1-41 are cleaved as a signal peptide; it reads MKFSIAAAVVAFAASVAALPPAHDSQFAGNGVGNKGNSNVK. Asn-47 carries N-linked (GlcNAc...) asparagine glycosylation. Cystine bridges form between Cys-57-Cys-131, Cys-65-Cys-125, Cys-66-Cys-106, and Cys-132-Cys-150.

The protein belongs to the fungal hydrophobin family. Self-assembles to form functional amyloid fibrils called rodlets. Self-assembly into fibrillar rodlets occurs spontaneously at hydrophobic:hydrophilic interfaces and the rodlets further associate laterally to form amphipathic monolayers.

It is found in the secreted. The protein resides in the spore wall. Its function is as follows. Aerial growth, conidiation, and dispersal of filamentous fungi in the environment rely upon a capability of their secreting small amphipathic proteins called hydrophobins (HPBs) with low sequence identity. Class I can self-assemble into an outermost layer of rodlet bundles on aerial cell surfaces, conferring cellular hydrophobicity that supports fungal growth, development and dispersal; whereas Class II form highly ordered films at water-air interfaces through intermolecular interactions but contribute nothing to the rodlet structure. RodA is a class I hydrophobin that contributes to surface hydrophobicity, which is important for processes such as association of hyphae in reproductive structures, dispersal of aerial spores and adhesion of pathogens to host structures. Important for the formation of hydrophobic rodlet layers of asexually-produced spores. Promotes also biofilm formation and may enhance lignocellulose utilization via promoting a compact substrate-enzyme-fungus structure. The protein is Class I hydrophobin rodA of Emericella nidulans (strain FGSC A4 / ATCC 38163 / CBS 112.46 / NRRL 194 / M139) (Aspergillus nidulans).